Consider the following 211-residue polypeptide: Major fimbrial subunit (211 aa).

The N-terminal stretch at 1–20 (MKKTLLGSLILLAFAGNVQA) is a signal peptide. A disulfide bridge links Cys-43 with Cys-83.

Belongs to the fimbrial protein family.

It is found in the fimbrium. Functionally, mediates adherence to oropharyngeal epithelial cells. Helps the airway colonization process. The sequence is that of Major fimbrial subunit (hifA) from Haemophilus influenzae.